The sequence spans 103 residues: uncharacterized protein (103 aa).

A helical transmembrane segment spans residues 37-57; the sequence is FILLSSLLIGGLLITIACYHI.

It localises to the membrane. This is an uncharacterized protein from Saccharomyces cerevisiae (strain ATCC 204508 / S288c) (Baker's yeast).